Here is a 463-residue protein sequence, read N- to C-terminus: Protein phosphatase PP2A regulatory subunit B (463 aa).

WD repeat units lie at residues 27–66 (TEAD…KGCE) and 87–128 (EIEE…LKVV). The residue at position 134 (Ser134) is a Phosphoserine. WD repeat units lie at residues 174-212 (AHAY…HSFN), 223-263 (ELTE…LCDN), 282-320 (EIIS…APVK), and 337-378 (ENDC…PGDR).

This sequence belongs to the phosphatase 2A regulatory subunit B family. As to quaternary structure, PP2A exists in several trimeric forms, all of which consist of a core composed of a catalytic subunit associated with a 65 kDa (PR65) (Subunit A) and a 55 kDa (PR55) (Subunit B) regulatory subunit.

In terms of biological role, phosphatase 2A affects a variety of biological processes in the cell such as transcription, cell cycle progression and cellular morphogenesis, and provides an initial identification of critical substrates for this phosphatase. The regulatory subunit may direct the catalytic subunit to distinct, albeit overlapping, subsets of substrates. The polypeptide is Protein phosphatase PP2A regulatory subunit B (pab1) (Schizosaccharomyces pombe (strain 972 / ATCC 24843) (Fission yeast)).